An 830-amino-acid chain; its full sequence is MSRDLRGRGCPRGRGFQGWRGGWRGGWRGGWRGGWRGRTQKVEWKRAPEPASSRLVQSTLDQFIPYKGWKLYFSEAYADKSPFVQKTQAFEKFFMQRIELYDKDEIERKGSILVDYKELIEDRELTKSIPNISTELRDMPQKILQCMGLAIHQVLTKDLERHAAELQVQEGLPLDGEPIINVPLIHARLYNYEPLTQLKNVRANCYGKYIALRGTVVRVSNIKPLCTKLAFVCGTCGDVQSVPLPDGKYTLPTKCLVPECRGRSFTPDRSSPLTATVDWQSVKVQELMSDDQREAGRIPRTIECELVQDLVDSCVPGDVVTITGVVKVSSTEEGASKNKNDKCVFLLYIEANSVSNSKGQKTKNFEEETFQRSFMEFSLKDLYAVQEIQAEENLFRIIVNSLCPAIYGHEIVKAGLALALFGGCQKFVDDKNRIPVRGDPHVLIVGDPGLGKSQMLQAVCNVAPRGVYVCGNTSTSSGLTVTLSRDGASGDFALEAGALVLGDQGICGIDEFDKMGSQHQALLEAMEQQSISLAKAGIVCSLPARTSIVAAANPVGGHYNKAKTVSENLKMGSALLSRFDLVFILLDTPNEDHDHLLSEHVMAIRAGKQAVCSSAVVSRTNVQDRSVLEVVSDRPLLERLKISPGENFDAIPHQLLRKYVGYARQYVHPHLSPEAAQVLQEFYLELRKQNQGASSTPITTRQLESLIRLTEARSRLELREKCTKEDAEDVIEIMKYSMLGTYSDEFGKLDFERSQHGSGMSNRSQAKRFVSALSSIAERTYSNLFDLQQLRQVAKELQIRVFDFESFIESLNDQGYLLKKGSRLYQLQTM.

One can recognise an MCM domain in the interval 394–601 (LFRIIVNSLC…DHDHLLSEHV (208 aa)). Residue 446-453 (GDPGLGKS) coordinates ATP.

The protein belongs to the MCM family. As to quaternary structure, component of the MCM8-MCM9 complex, which forms a hexamer composed of MCM8 and MCM9.

It localises to the nucleus. The enzyme catalyses ATP + H2O = ADP + phosphate + H(+). Functionally, component of the MCM8-MCM9 complex, a complex involved in homologous recombination repair following DNA interstrand cross-links and plays a key role during gametogenesis. The MCM8-MCM9 complex probably acts as a hexameric helicase required to process aberrant forks into homologous recombination substrates and to orchestrate homologous recombination with resection, fork stabilization and fork restart. The polypeptide is DNA helicase MCM8 (MCM8) (Gallus gallus (Chicken)).